Reading from the N-terminus, the 161-residue chain is Periplasmic chaperone Spy (161 aa).

The signal sequence occupies residues 1–23; it reads MRKLTALFVASTLALGAANLAHA. Residues 140–161 form a disordered region; it reads ANFEKRLTERPAAKGKMPATAE. Residues 142-151 show a composition bias toward basic and acidic residues; that stretch reads FEKRLTERPA.

The protein belongs to the CpxP/Spy family. As to quaternary structure, homodimer.

The protein resides in the periplasm. Functionally, an ATP-independent periplasmic chaperone, decreases protein aggregation and helps protein refolding. Binds substrate over a large region of its convex inner surface. Substrate protein folds while it is bound to chaperone. Increasing Spy flexibility increases its substrate affinity and overall chaperone activity (shown for 3 different substrates). Protects proteins in vitro against tannin inactivation; tannins have antimicrobial activity. Overexpression enhances the stability of otherwise unstable periplasmic proteins. In Escherichia coli (strain K12), this protein is Periplasmic chaperone Spy.